A 224-amino-acid chain; its full sequence is UPF0758 protein VFMJ11_0123 (224 aa).

The region spanning 102–224 is the MPN domain; sequence ALTSPEHTKR…IVSFAERGWI (123 aa). Zn(2+) is bound by residues histidine 173, histidine 175, and aspartate 186. The JAMM motif motif lies at 173–186; it reads HNHPSGVAEPSQAD.

The protein belongs to the UPF0758 family.

The sequence is that of UPF0758 protein VFMJ11_0123 from Aliivibrio fischeri (strain MJ11) (Vibrio fischeri).